Here is a 185-residue protein sequence, read N- to C-terminus: Ribosome-recycling factor (185 aa).

Belongs to the RRF family.

The protein resides in the cytoplasm. Its function is as follows. Responsible for the release of ribosomes from messenger RNA at the termination of protein biosynthesis. May increase the efficiency of translation by recycling ribosomes from one round of translation to another. The chain is Ribosome-recycling factor from Kocuria rhizophila (strain ATCC 9341 / DSM 348 / NBRC 103217 / DC2201).